The primary structure comprises 361 residues: Cdc42 effector protein 1 (361 aa).

Residues 1-29 (MPGPQGAGGAPAMNLGKLSPVGWVSSSQG) are disordered. S19 and S27 each carry phosphoserine. Residue T34 is modified to Phosphothreonine. The CRIB domain maps to 38 to 52 (ISPPLGDFRHTMHVG). S39 is subject to Phosphoserine. R53 bears the Omega-N-methylarginine mark. Phosphoserine occurs at positions 65, 73, 77, 101, 113, 121, 139, 180, 190, 192, and 195. The segment at 161 to 186 (CTISRLPRPEKPRDRDRDSSFPAEPE) is disordered. Over residues 167 to 186 (PRPEKPRDRDRDSSFPAEPE) the composition is skewed to basic and acidic residues. Disordered stretches follow at residues 218–300 (EGSA…SRHH) and 320–361 (SWGS…EVKV). Repeat copies occupy residues 220-226 (SAAETPA), 229-235 (PAASPPA), 236-242 (SVANPPA), and 243-249 (PASSPSL). Residues 220–249 (SAAETPAPAPAASPPASVANPPAPASSPSL) form a 4 X 7 AA tandem repeats of [PT]-[AT]-A-[ENT]-[PT]-[PTS]-[AG] region. A phosphoserine mark is found at S270, S320, and S323. Polar residues predominate over residues 332 to 347 (QAGSRTPVPSTVQANT). The span at 351 to 361 (ADAEEDDEVKV) shows a compositional bias: acidic residues.

This sequence belongs to the BORG/CEP family. As to quaternary structure, interacts with RHOQ and CDC42, in a GTP-dependent manner.

It localises to the endomembrane system. The protein resides in the cytoplasm. It is found in the cytoskeleton. Probably involved in the organization of the actin cytoskeleton. Induced membrane extensions in fibroblasts. The chain is Cdc42 effector protein 1 from Bos taurus (Bovine).